Consider the following 207-residue polypeptide: Protein 6b (207 aa).

Residues asparagine 161 to arginine 185 are disordered. Residues glutamate 164–glutamate 178 are compositionally biased toward acidic residues.

Functionally, involved in tumor formation and increases auxin and cytokinin effects in host plants. The polypeptide is Protein 6b (6b) (Agrobacterium tumefaciens (strain 15955)).